Reading from the N-terminus, the 69-residue chain is Calcium-binding protein (69 aa).

2 EF-hand domains span residues 2–37 (VNRT…VNCP) and 38–69 (FKKE…VLCS). Residues aspartate 15, aspartate 17, serine 19, lysine 21, glutamate 26, aspartate 51, aspartate 53, aspartate 55, glutamine 57, and glutamate 62 each contribute to the Ca(2+) site.

This Schistosoma mansoni (Blood fluke) protein is Calcium-binding protein.